The chain runs to 114 residues: C-X-C motif chemokine 5 (114 aa).

Residues 1 to 36 form the signal peptide; it reads MSLLSSRAARVPGPSSSLCALLVLLLLLTQPGPIAS. 2 disulfide bridges follow: Cys-49–Cys-75 and Cys-51–Cys-91.

This sequence belongs to the intercrine alpha (chemokine CxC) family. Monomer. Homodimer. In terms of processing, N-terminal processed forms ENA-78(8-78) and ENA-78(9-78) are produced by proteolytic cleavage after secretion from peripheral blood monocytes.

It is found in the secreted. Involved in neutrophil activation. In vitro, ENA-78(8-78) and ENA-78(9-78) show a threefold higher chemotactic activity for neutrophil granulocytes. In Homo sapiens (Human), this protein is C-X-C motif chemokine 5 (CXCL5).